The primary structure comprises 941 residues: Heat shock protein 70 homolog (941 aa).

The disordered stretch occupies residues 851–887 (ENQPDIPEDSEDSESEDDTTTSKDSESSEITENLALP). Residues 856-869 (IPEDSEDSESEDDT) show a composition bias toward acidic residues.

This sequence belongs to the heat shock protein 70 family.

Functionally, probable chaperone. The sequence is that of Heat shock protein 70 homolog from Acanthamoeba polyphaga (Amoeba).